The following is a 93-amino-acid chain: uncharacterized protein (93 aa).

One can recognise a TRAM domain in the interval 24 to 85 (QLQVGDTLKL…IQTQVGRLFF (62 aa)).

This sequence belongs to the ycf81 family.

This is an uncharacterized protein from Thermus thermophilus.